A 243-amino-acid polypeptide reads, in one-letter code: Type II restriction enzyme NlaIV (243 aa).

It catalyses the reaction Endonucleolytic cleavage of DNA to give specific double-stranded fragments with terminal 5'-phosphates.. In terms of biological role, a P subtype restriction enzyme that recognizes the double-stranded sequence 5'-GGNNCC-3' and cleaves after N-3. The chain is Type II restriction enzyme NlaIV (nlaIVR) from Neisseria lactamica.